We begin with the raw amino-acid sequence, 259 residues long: BTB/POZ domain-containing protein KCTD4 (259 aa).

The disordered stretch occupies residues 1 to 22 (MEHKINRREKEKDYEGKHNSLE). One can recognise a BTB domain in the interval 33 to 134 (TLMTLNVGGY…EVKSRWEKEQ (102 aa)).

In Bos taurus (Bovine), this protein is BTB/POZ domain-containing protein KCTD4 (KCTD4).